The chain runs to 445 residues: Tubulin beta-4B chain (445 aa).

Positions 1–4 (MREI) match the MREI motif motif. Gln11 lines the GTP pocket. At Thr55 the chain carries Phosphothreonine. Position 58 is an N6-acetyllysine (Lys58). Residues Glu69, Ser138, Gly142, Thr143, and Gly144 each coordinate GTP. Glu69 lines the Mg(2+) pocket. Ser172 carries the post-translational modification Phosphoserine; by CDK1. GTP-binding residues include Asn204 and Asn226. The segment at 426-445 (QDATAEEEGEFEEEAEEEVA) is disordered. Over residues 429–445 (TAEEEGEFEEEAEEEVA) the composition is skewed to acidic residues. 5-glutamyl polyglutamate is present on Glu438.

The protein belongs to the tubulin family. In terms of assembly, dimer of alpha and beta chains. A typical microtubule is a hollow water-filled tube with an outer diameter of 25 nm and an inner diameter of 15 nM. Alpha-beta heterodimers associate head-to-tail to form protofilaments running lengthwise along the microtubule wall with the beta-tubulin subunit facing the microtubule plus end conferring a structural polarity. Microtubules usually have 13 protofilaments but different protofilament numbers can be found in some organisms and specialized cells. Component of sperm flagellar doublet microtubules. Requires Mg(2+) as cofactor. In terms of processing, some glutamate residues at the C-terminus are polyglycylated, resulting in polyglycine chains on the gamma-carboxyl group. Glycylation is mainly limited to tubulin incorporated into axonemes (cilia and flagella) whereas glutamylation is prevalent in neuronal cells, centrioles, axonemes, and the mitotic spindle. Both modifications can coexist on the same protein on adjacent residues, and lowering polyglycylation levels increases polyglutamylation, and reciprocally. Cilia and flagella glycylation is required for their stability and maintenance. Flagella glycylation controls sperm motility. Post-translationally, some glutamate residues at the C-terminus are polyglutamylated, resulting in polyglutamate chains on the gamma-carboxyl group. Polyglutamylation plays a key role in microtubule severing by spastin (SPAST). SPAST preferentially recognizes and acts on microtubules decorated with short polyglutamate tails: severing activity by SPAST increases as the number of glutamates per tubulin rises from one to eight, but decreases beyond this glutamylation threshold. Glutamylation is also involved in cilia motility. Phosphorylated on Ser-172 by CDK1 during the cell cycle, from metaphase to telophase, but not in interphase. This phosphorylation inhibits tubulin incorporation into microtubules.

Its subcellular location is the cytoplasm. It localises to the cytoskeleton. The protein resides in the flagellum axoneme. Its function is as follows. Tubulin is the major constituent of microtubules, a cylinder consisting of laterally associated linear protofilaments composed of alpha- and beta-tubulin heterodimers. Microtubules grow by the addition of GTP-tubulin dimers to the microtubule end, where a stabilizing cap forms. Below the cap, tubulin dimers are in GDP-bound state, owing to GTPase activity of alpha-tubulin. The sequence is that of Tubulin beta-4B chain (Tubb4b) from Rattus norvegicus (Rat).